Reading from the N-terminus, the 524-residue chain is Unconventional prefoldin RPB5 interactor (524 aa).

3 disordered regions span residues 1 to 20, 284 to 320, and 335 to 373; these read MEAP…LRAP, SVNG…EDNS, and VRIN…ELPM. The segment covering 296 to 307 has biased composition (acidic residues); the sequence is DDGDNNDDGGDS. The residue at position 361 (Ser361) is a Phosphoserine; by RPS6KB1. Phosphoserine is present on Ser431.

Belongs to the RNA polymerase II subunit 5-mediating protein family. As to quaternary structure, homodimer. Component of the PAQosome complex which is responsible for the biogenesis of several protein complexes and which consists of R2TP complex members RUVBL1, RUVBL2, RPAP3 and PIH1D1, URI complex members PFDN2, PFDN6, PDRG1, UXT and URI1 as well as ASDURF, POLR2E and DNAAF10/WDR92. Interacts with POLR2E/RPB5, RUVBL2 and RUVBL1. Interacts with PFDN2, PFDN4 and STAP1; the interactions are phosphorylation-dependent and occur in a growth-dependent manner in the mitochondrion. Interacts with UXT. Interacts with PPP1CC; the interaction is phosphorylation-dependent and occurs in a growth factor-dependent manner. Interacts (via the middle C-terminal region) with GTF2F1 and GTF2F2. Interacts with DMAP1. Interacts with TSC1 and TSC2. Interacts with PRPF8 and EFTUD2 in a ZNHIT2-dependent manner. Phosphorylated. Phosphorylation occurs essentially on serine residues. Phosphorylation occurs in response to androgen treatment in prostate cancer cells in a mTOR-dependent manner. Phosphorylated; hyperhosphorylated in mitochondria in a mTORC-dependent signaling pathway. Phosphorylated at Ser-361 by RPS6KB1 in a growth factor- and rapamycin-dependent manner. S6K1-mediated mitochondrial phosphorylation at Ser-361 disrupts the URI1-PPP1CC complex in the mitochondrion, relieves PPP1CC phosphatase inhibition activity and hence engages a negative feedback diminishing RPS6KB1 kinase activity, preventing sustained S6K1-dependent signaling.

It localises to the nucleus. The protein resides in the cytoplasm. It is found in the mitochondrion. Its subcellular location is the cell projection. The protein localises to the dendrite. Its function is as follows. Involved in gene transcription regulation. Acts as a transcriptional repressor in concert with the corepressor UXT to regulate androgen receptor (AR) transcription. May act as a tumor suppressor to repress AR-mediated gene transcription and to inhibit anchorage-independent growth in prostate cancer cells. Required for cell survival in ovarian cancer cells. Together with UXT, associates with chromatin to the NKX3-1 promoter region. In terms of biological role, plays a central role in maintaining S6K1 signaling and BAD phosphorylation under normal growth conditions thereby protecting cells from potential deleterious effects of sustained S6K1 signaling. The URI1-PPP1CC complex acts as a central component of a negative feedback mechanism that counteracts excessive S6K1 survival signaling to BAD in response to growth factors. Mediates inhibition of PPP1CC phosphatase activity in mitochondria. Coordinates the regulation of nutrient-sensitive gene expression availability in a mTOR-dependent manner. Seems to be a scaffolding protein able to assemble a prefoldin-like complex that contains PFDs and proteins with roles in transcription and ubiquitination. The chain is Unconventional prefoldin RPB5 interactor (URI1) from Bos taurus (Bovine).